The primary structure comprises 411 residues: Flagellum-associated coiled-coil domain-containing protein 1 (411 aa).

A disordered region spans residues 52–77 (SQPAKSTAFPRDKAQSRKLEESNKAP). Basic and acidic residues predominate over residues 61–74 (PRDKAQSRKLEESN). Coiled-coil stretches lie at residues 124–220 (SDII…LKNM) and 278–328 (NESF…VVLE). Lys-353 carries the post-translational modification N6-acetyllysine. The stretch at 355–385 (FQTKLAEAEEKYKSTIQVLTEENNSLRQKVL) forms a coiled coil.

It is found in the cytoplasm. The protein resides in the cytoplasmic granule. It localises to the cell projection. Its subcellular location is the cilium. The protein localises to the flagellum. The chain is Flagellum-associated coiled-coil domain-containing protein 1 from Rattus norvegicus (Rat).